Consider the following 263-residue polypeptide: Small ribosomal subunit protein bS1c (263 aa).

S1 motif domains are found at residues 27 to 96, 114 to 178, and 192 to 260; these read GDIV…LSIR, DSLL…LSHR, and GNII…LSMK.

Belongs to the bacterial ribosomal protein bS1 family.

It is found in the plastid. The protein resides in the chloroplast. The sequence is that of Small ribosomal subunit protein bS1c (rps1) from Porphyra purpurea (Red seaweed).